The chain runs to 182 residues: Putative adenylate kinase (182 aa).

ATP contacts are provided by G10, G12, K13, T14, and S15. The interval 30–53 (HLNEMIKEEHLYTEVDEVRDAVIA) is NMP. Residues 104 to 114 (ARGYSEEKIRE) are LID. R105 and K143 together coordinate ATP.

Belongs to the adenylate kinase family. AK6 subfamily. Interacts with uS11. Not a structural component of 40S pre-ribosomes, but transiently interacts with them by binding to uS11.

It catalyses the reaction AMP + ATP = 2 ADP. The catalysed reaction is ATP + H2O = ADP + phosphate + H(+). Broad-specificity nucleoside monophosphate (NMP) kinase that catalyzes the reversible transfer of the terminal phosphate group between nucleoside triphosphates and monophosphates. Also has ATPase activity. Involved in the late maturation steps of the 30S ribosomal particles, specifically 16S rRNA maturation. While NMP activity is not required for ribosome maturation, ATPase activity is. Associates transiently with small ribosomal subunit protein uS11. ATP hydrolysis breaks the interaction with uS11. May temporarily remove uS11 from the ribosome to enable a conformational change of the ribosomal RNA that is needed for the final maturation step of the small ribosomal subunit. This is Putative adenylate kinase from Methanosarcina barkeri (strain Fusaro / DSM 804).